A 521-amino-acid polypeptide reads, in one-letter code: Bifunctional purine biosynthesis protein PurH (521 aa).

In terms of domain architecture, MGS-like spans 1–145 (MIKQALISVS…KNHRDVTVVV (145 aa)).

Belongs to the PurH family.

It carries out the reaction (6R)-10-formyltetrahydrofolate + 5-amino-1-(5-phospho-beta-D-ribosyl)imidazole-4-carboxamide = 5-formamido-1-(5-phospho-D-ribosyl)imidazole-4-carboxamide + (6S)-5,6,7,8-tetrahydrofolate. It catalyses the reaction IMP + H2O = 5-formamido-1-(5-phospho-D-ribosyl)imidazole-4-carboxamide. It participates in purine metabolism; IMP biosynthesis via de novo pathway; 5-formamido-1-(5-phospho-D-ribosyl)imidazole-4-carboxamide from 5-amino-1-(5-phospho-D-ribosyl)imidazole-4-carboxamide (10-formyl THF route): step 1/1. Its pathway is purine metabolism; IMP biosynthesis via de novo pathway; IMP from 5-formamido-1-(5-phospho-D-ribosyl)imidazole-4-carboxamide: step 1/1. This is Bifunctional purine biosynthesis protein PurH from Paraburkholderia xenovorans (strain LB400).